A 1048-amino-acid chain; its full sequence is FHIP family protein GJ17503 (1048 aa).

Residues 1–15 are compositionally biased toward polar residues; the sequence is MSWLRTSPLRQSLTR. Residues 1–32 form a disordered region; the sequence is MSWLRTSPLRQSLTRNSGSSGSGNSSATTTLR. Positions 16–26 are enriched in low complexity; sequence NSGSSGSGNSS. Serine 500 bears the Phosphoserine mark. Disordered stretches follow at residues 652 to 675, 813 to 871, and 924 to 984; these read TTTATSDTDLEHNNSSSIGSGRRD, APMH…KRRS, and ARGA…ESGL. Residues 816-838 show a composition bias toward low complexity; that stretch reads HQQHQQQQLQHTTNPTQQQQAQQ. 2 stretches are compositionally biased toward polar residues: residues 839 to 857 and 929 to 954; these read RSTYATLSAATPVQASPTS and QEQSRGNTCETSLSTAPRQEAQTAVV. Residues 955 to 978 are compositionally biased toward low complexity; the sequence is SSSNSSIGGSTQTLSATHSSSTLH.

The protein belongs to the FHIP family.

In Drosophila virilis (Fruit fly), this protein is FHIP family protein GJ17503.